A 117-amino-acid chain; its full sequence is Ribosome-binding factor A (117 aa).

It belongs to the RbfA family. In terms of assembly, monomer. Binds 30S ribosomal subunits, but not 50S ribosomal subunits or 70S ribosomes.

The protein localises to the cytoplasm. One of several proteins that assist in the late maturation steps of the functional core of the 30S ribosomal subunit. Associates with free 30S ribosomal subunits (but not with 30S subunits that are part of 70S ribosomes or polysomes). Required for efficient processing of 16S rRNA. May interact with the 5'-terminal helix region of 16S rRNA. The sequence is that of Ribosome-binding factor A from Streptococcus suis (strain 98HAH33).